Consider the following 382-residue polypeptide: 8-amino-7-oxononanoate synthase (382 aa).

R26 is a substrate binding site. 104–105 (GY) is a pyridoxal 5'-phosphate binding site. Position 129 (H129) interacts with substrate. Pyridoxal 5'-phosphate contacts are provided by residues S175, 200-203 (DEAH), and 232-235 (TLSK). K235 is subject to N6-(pyridoxal phosphate)lysine. T345 is a binding site for substrate.

Belongs to the class-II pyridoxal-phosphate-dependent aminotransferase family. BioF subfamily. In terms of assembly, homodimer. Requires pyridoxal 5'-phosphate as cofactor.

It catalyses the reaction 6-carboxyhexanoyl-[ACP] + L-alanine + H(+) = (8S)-8-amino-7-oxononanoate + holo-[ACP] + CO2. It functions in the pathway cofactor biosynthesis; biotin biosynthesis. Its function is as follows. Catalyzes the decarboxylative condensation of pimeloyl-[acyl-carrier protein] and L-alanine to produce 8-amino-7-oxononanoate (AON), [acyl-carrier protein], and carbon dioxide. The sequence is that of 8-amino-7-oxononanoate synthase (bioF) from Mycolicibacterium smegmatis (strain ATCC 700084 / mc(2)155) (Mycobacterium smegmatis).